The sequence spans 148 residues: Probable histone H2B.1 (148 aa).

Residues 1 to 32 are compositionally biased toward basic and acidic residues; sequence MAPKGEKKPAEKKPAEEKKSTVAEKAPAEKKP. Residues 1–57 are disordered; it reads MAPKGEKKPAEKKPAEEKKSTVAEKAPAEKKPKAGKKLPKEGGSAAGEKKKKRSKKS. Lys-7, Lys-36, and Lys-37 each carry N6-acetyllysine. Lys-144 participates in a covalent cross-link: Glycyl lysine isopeptide (Lys-Gly) (interchain with G-Cter in ubiquitin).

Belongs to the histone H2B family. In terms of assembly, the nucleosome is a histone octamer containing two molecules each of H2A, H2B, H3 and H4 assembled in one H3-H4 heterotetramer and two H2A-H2B heterodimers. The octamer wraps approximately 147 bp of DNA. Can be acetylated to form H2BK6ac, H2BK33ac and H2BK34ac. In terms of processing, monoubiquitinated to form H2BK143ub1; may give a specific tag for epigenetic transcriptional activation.

Its subcellular location is the nucleus. It localises to the chromosome. Its function is as follows. Core component of nucleosome. Nucleosomes wrap and compact DNA into chromatin, limiting DNA accessibility to the cellular machineries which require DNA as a template. Histones thereby play a central role in transcription regulation, DNA repair, DNA replication and chromosomal stability. DNA accessibility is regulated via a complex set of post-translational modifications of histones, also called histone code, and nucleosome remodeling. The polypeptide is Probable histone H2B.1 (Medicago truncatula (Barrel medic)).